We begin with the raw amino-acid sequence, 129 residues long: Follitropin subunit beta (129 aa).

Positions 1–18 are cleaved as a signal peptide; it reads MKSVQFCFLFCCWRAICC. Intrachain disulfides connect C21-C69, C35-C84, C38-C122, C46-C100, C50-C102, and C105-C112. N-linked (GlcNAc...) asparagine glycans are attached at residues N25 and N42.

Belongs to the glycoprotein hormones subunit beta family. As to quaternary structure, heterodimer. The active follitropin is a heterodimer composed of an alpha chain/CGA shared with other hormones and a unique beta chain/FSHB shown here.

It is found in the secreted. Its function is as follows. Together with the alpha chain CGA constitutes follitropin, the follicle-stimulating hormone, and provides its biological specificity to the hormone heterodimer. Binds FSHR, a G protein-coupled receptor, on target cells to activate downstream signaling pathways. Follitropin is involved in follicle development and spermatogenesis in reproductive organs. The sequence is that of Follitropin subunit beta (FSHB) from Capra hircus (Goat).